The sequence spans 24 residues: Iron-regulated 31 kDa protein (24 aa).

Its subcellular location is the periplasm. In terms of biological role, may be involved in iron uptake. The polypeptide is Iron-regulated 31 kDa protein (Haemophilus influenzae).